A 567-amino-acid chain; its full sequence is Proline--tRNA ligase (567 aa).

The protein belongs to the class-II aminoacyl-tRNA synthetase family. ProS type 1 subfamily. Homodimer.

The protein resides in the cytoplasm. The catalysed reaction is tRNA(Pro) + L-proline + ATP = L-prolyl-tRNA(Pro) + AMP + diphosphate. Its function is as follows. Catalyzes the attachment of proline to tRNA(Pro) in a two-step reaction: proline is first activated by ATP to form Pro-AMP and then transferred to the acceptor end of tRNA(Pro). As ProRS can inadvertently accommodate and process non-cognate amino acids such as alanine and cysteine, to avoid such errors it has two additional distinct editing activities against alanine. One activity is designated as 'pretransfer' editing and involves the tRNA(Pro)-independent hydrolysis of activated Ala-AMP. The other activity is designated 'posttransfer' editing and involves deacylation of mischarged Ala-tRNA(Pro). The misacylated Cys-tRNA(Pro) is not edited by ProRS. This chain is Proline--tRNA ligase, found in Geobacillus sp. (strain WCH70).